The primary structure comprises 199 residues: Prefoldin subunit 3 (199 aa).

Methionine 1 carries the post-translational modification N-acetylmethionine.

This sequence belongs to the prefoldin subunit alpha family. Heterohexamer of two PFD-alpha type and four PFD-beta type subunits.

Functionally, binds specifically to cytosolic chaperonin (c-CPN) and transfers target proteins to it. Binds to nascent polypeptide chain and promotes folding in an environment in which there are many competing pathways for nonnative proteins. The sequence is that of Prefoldin subunit 3 (PAC10) from Saccharomyces cerevisiae (strain ATCC 204508 / S288c) (Baker's yeast).